The chain runs to 43 residues: Disintegrin CV (43 aa).

4 disulfides stabilise this stretch: Cys-1–Cys-10, Cys-6–Cys-29, Cys-7–Cys-34, and Cys-19–Cys-36. Residues 1–43 form the Disintegrin domain; that stretch reads CTTGPCCRQCKLKPAGTTCWRTSVSSHYCTGRSCECPSYPGNG. The Cell attachment site; atypical (RTS) motif lies at 21–23; the sequence is RTS.

This sequence belongs to the disintegrin family. Short disintegrin subfamily. In terms of assembly, monomer. In terms of tissue distribution, expressed by the venom gland.

Its subcellular location is the secreted. Its function is as follows. Specifically interacts with the alpha-1/beta-1 integrin (ITGA1/ITGB1). Exhibits highly inhibitory effects on cell adhesion and cell migration to collagens I and IV. Also shows in vivo anti-angiogenic activity. In Cerastes vipera (Sahara sand viper), this protein is Disintegrin CV.